A 221-amino-acid polypeptide reads, in one-letter code: Tetraspanin-2 (221 aa).

Residues Met-1–Tyr-13 lie on the Cytoplasmic side of the membrane. The helical transmembrane segment at Leu-14 to Leu-34 threads the bilayer. Topologically, residues Trp-35 to Tyr-54 are extracellular. Residues Phe-55–Phe-75 traverse the membrane as a helical segment. Topologically, residues Gly-76–Ser-90 are cytoplasmic. A helical membrane pass occupies residues Phe-91 to Ile-111. The Extracellular portion of the chain corresponds to Gly-112 to Leu-188. An N-linked (GlcNAc...) asparagine glycan is attached at Asn-139. The helical transmembrane segment at Ile-189–Val-209 threads the bilayer. Residues Leu-210–Ile-221 are Cytoplasmic-facing.

The protein belongs to the tetraspanin (TM4SF) family.

The protein localises to the membrane. Functionally, may play a role in signalling in oligodendrocytes in the early stages of their terminal differentiation into myelin-forming glia and may also function in stabilizing the mature sheath. The sequence is that of Tetraspanin-2 (TSPAN2) from Homo sapiens (Human).